A 383-amino-acid chain; its full sequence is MVKKILIVFGTRPEAIKMAPLVKIMENRNDVNFRVCVTGQHRQMLDQILNIFDIKPDYDLNIMQENQDLYDITLKILCGMKNVLNDFKPNIVLVHGDTTTASVTALAAFYQKIKIAHVEAGLRTYNICNPWPEEANRQIIGVLANIHFTPTVKSAENLIKEGKNKEGIFITGNTVIDALFYMTEKIKNDKTFKIKVLSSIGNEYKINDNKKFILVTGHRRENFGEGFLQICEALKIIAINNPDIDIVYPVHLNPNVQKPVKMLLLNISNIYLINPLKYEEFIYLMSKSYFIITDSGGIQEEAPSLGKPILVMRETTERPEAVEAGVVKLVGACKQNIIRESQKLIDDQDEYEKMSKAYNPYGDGRACEKIINILIKGKNNESI.

Belongs to the UDP-N-acetylglucosamine 2-epimerase family.

It catalyses the reaction UDP-N-acetyl-alpha-D-glucosamine = UDP-N-acetyl-alpha-D-mannosamine. The protein operates within capsule biogenesis; capsule polysaccharide biosynthesis. In terms of biological role, non-hydrolyzing C2-epimerase involved in the biosynthesis of capsular polysaccharides. Catalyzes the C2 epimerization of UDP-N-acetylglucosamine (UDP-GlcNAc) to form UDP-N-acetylmannosamine (UDP-ManNAc). In Campylobacter jejuni, this protein is UDP-N-acetylglucosamine 2-epimerase.